The sequence spans 185 residues: Potassium-transporting ATPase KdpC subunit 2 (185 aa).

The helical transmembrane segment at 8–28 threads the bilayer; the sequence is LGLVLIMFVLCGFIFPLTVTA.

This sequence belongs to the KdpC family. The system is composed of three essential subunits: KdpA, KdpB and KdpC.

The protein localises to the cell membrane. The protein resides in the membrane raft. Part of the high-affinity ATP-driven potassium transport (or Kdp) system, which catalyzes the hydrolysis of ATP coupled with the electrogenic transport of potassium into the cytoplasm. This subunit acts as a catalytic chaperone that increases the ATP-binding affinity of the ATP-hydrolyzing subunit KdpB by the formation of a transient KdpB/KdpC/ATP ternary complex. This Staphylococcus aureus (strain Mu50 / ATCC 700699) protein is Potassium-transporting ATPase KdpC subunit 2.